A 274-amino-acid chain; its full sequence is Putative pyruvate, phosphate dikinase regulatory protein 1 (274 aa).

149 to 156 (GISRTSKT) provides a ligand contact to ADP.

The protein belongs to the pyruvate, phosphate/water dikinase regulatory protein family. PDRP subfamily.

The enzyme catalyses N(tele)-phospho-L-histidyl/L-threonyl-[pyruvate, phosphate dikinase] + ADP = N(tele)-phospho-L-histidyl/O-phospho-L-threonyl-[pyruvate, phosphate dikinase] + AMP + H(+). It catalyses the reaction N(tele)-phospho-L-histidyl/O-phospho-L-threonyl-[pyruvate, phosphate dikinase] + phosphate + H(+) = N(tele)-phospho-L-histidyl/L-threonyl-[pyruvate, phosphate dikinase] + diphosphate. Bifunctional serine/threonine kinase and phosphorylase involved in the regulation of the pyruvate, phosphate dikinase (PPDK) by catalyzing its phosphorylation/dephosphorylation. In Listeria monocytogenes serotype 4b (strain F2365), this protein is Putative pyruvate, phosphate dikinase regulatory protein 1.